Here is a 411-residue protein sequence, read N- to C-terminus: Multifunctional CCA protein (411 aa).

G8 and R11 together coordinate ATP. Residues G8 and R11 each coordinate CTP. 2 residues coordinate Mg(2+): D21 and D23. ATP is bound by residues R91, R143, and R146. R91, R143, and R146 together coordinate CTP. An HD domain is found at 232–333 (TGVHVMMVID…MRLLERCDAL (102 aa)).

Belongs to the tRNA nucleotidyltransferase/poly(A) polymerase family. Bacterial CCA-adding enzyme type 1 subfamily. Monomer. Can also form homodimers and oligomers. Mg(2+) serves as cofactor. It depends on Ni(2+) as a cofactor.

It carries out the reaction a tRNA precursor + 2 CTP + ATP = a tRNA with a 3' CCA end + 3 diphosphate. It catalyses the reaction a tRNA with a 3' CCA end + 2 CTP + ATP = a tRNA with a 3' CCACCA end + 3 diphosphate. Its function is as follows. Catalyzes the addition and repair of the essential 3'-terminal CCA sequence in tRNAs without using a nucleic acid template. Adds these three nucleotides in the order of C, C, and A to the tRNA nucleotide-73, using CTP and ATP as substrates and producing inorganic pyrophosphate. tRNA 3'-terminal CCA addition is required both for tRNA processing and repair. Also involved in tRNA surveillance by mediating tandem CCA addition to generate a CCACCA at the 3' terminus of unstable tRNAs. While stable tRNAs receive only 3'-terminal CCA, unstable tRNAs are marked with CCACCA and rapidly degraded. This Cupriavidus necator (strain ATCC 17699 / DSM 428 / KCTC 22496 / NCIMB 10442 / H16 / Stanier 337) (Ralstonia eutropha) protein is Multifunctional CCA protein.